The primary structure comprises 511 residues: RNA polymerase principal sigma factor HrdB (511 aa).

A disordered region spans residues 72-186 (SAAEPKRTRK…AATEEPEGTE (115 aa)). The span at 78–93 (RTRKSVAAKSPAKRTA) shows a compositional bias: basic residues. A compositionally biased stretch (low complexity) spans 94–121 (TKAVAAKPVTSRKATAPAAPAAPATEPA). The segment covering 132–158 (AAAKKTTAKKATAKKTTAKKAAAKKTT) has biased composition (basic residues). Positions 211–347 (TADPVKDYLK…ITRAMADQAR (137 aa)) are binds RNA polymerase-binding protein RbpA. A sigma-70 factor domain-2 region spans residues 278–348 (LLEANLRLVV…TRAMADQART (71 aa)). The Interaction with polymerase core subunit RpoC motif lies at 302-305 (DLIQ). The interval 357–433 (EVINKLARVQ…DSEAVVPADA (77 aa)) is sigma-70 factor domain-3. Residues 446-499 (VLDTLSEREAGVVSMRFGLTDGQPKTLDEIGKVYGVTRERIRQIESKTMSKLRH) form a sigma-70 factor domain-4 region. Positions 472–491 (LDEIGKVYGVTRERIRQIES) form a DNA-binding region, H-T-H motif.

Belongs to the sigma-70 factor family. As to quaternary structure, homotrimer (Potential). interacts transiently with the RNA polymerase core complex. Interacts with RNA polymerase-binding protein RbpA via its sigma-2 region (residues 211-347) in a free form.

Its function is as follows. Sigma factors are initiation factors that promote the attachment of RNA polymerase to specific initiation sites and are then released. This sigma factor is the primary sigma factor during exponential growth. Its activity is stimulated by RbpA. The sequence is that of RNA polymerase principal sigma factor HrdB (hrdB) from Streptomyces coelicolor (strain ATCC BAA-471 / A3(2) / M145).